We begin with the raw amino-acid sequence, 504 residues long: Anaerobic nitric oxide reductase transcription regulator NorR (504 aa).

4-aspartylphosphate is present on Asp-57. A Sigma-54 factor interaction domain is found at 187–416 (MIGLSPGMTQ…LEHAIHRAVV (230 aa)). Residues 215-222 (GETGTGKE) and 278-287 (ADNGTLFLDE) contribute to the ATP site. Residues 479-498 (WAACARMLETDVANLHRLAK) constitute a DNA-binding region (H-T-H motif).

Its pathway is nitrogen metabolism; nitric oxide reduction. Required for the expression of anaerobic nitric oxide (NO) reductase, acts as a transcriptional activator for at least the norVW operon. Activation also requires sigma-54. The chain is Anaerobic nitric oxide reductase transcription regulator NorR from Escherichia coli (strain SE11).